The sequence spans 431 residues: Probable amino-acid ABC transporter periplasmic-binding protein y4oP (431 aa).

Positions 1–25 (MKRRTFTAGLAALPFLGSSLTRAFA) are cleaved as a signal peptide.

It belongs to the bacterial solute-binding protein 1 family.

The protein localises to the periplasm. Probably part of the binding-protein-dependent transport system y4oPQRS. This system probably transports a sugar-like molecule. The protein is Probable amino-acid ABC transporter periplasmic-binding protein y4oP of Sinorhizobium fredii (strain NBRC 101917 / NGR234).